The following is a 280-amino-acid chain: uncharacterized protein (280 aa).

4 consecutive CBS domains span residues 10–67 (QNKK…GSKY), 90–146 (MEEN…KIDE), 154–209 (ITRD…DWAF), and 229–280 (MKRD…KYFA).

This is an uncharacterized protein from Methanocaldococcus jannaschii (strain ATCC 43067 / DSM 2661 / JAL-1 / JCM 10045 / NBRC 100440) (Methanococcus jannaschii).